Consider the following 158-residue polypeptide: Mitotic-spindle organizing protein 2 (158 aa).

Ser34 bears the Phosphoserine mark. The segment at 81–158 (AGQRVASDSQ…PGRSPPRSGT (78 aa)) is disordered. Residues 110 to 119 (KGGGALGGGP) are compositionally biased toward gly residues. Residue Ser152 is modified to Phosphoserine.

Belongs to the MOZART2 family. Associates with the gamma-tubulin ring complex (gTuRC) consisting of TUBGCP2, TUBGCP3, TUBGCP4, TUBGCP5 and TUBGCP6 and gamma-tubulin TUBG1 or TUBG2; within the complex, interacts with TUBGCP2; the interaction plays a role in gTuRC activation.

It localises to the cytoplasm. The protein resides in the cytoskeleton. Its subcellular location is the microtubule organizing center. The protein localises to the centrosome. It is found in the spindle. Functionally, required for the recruitment and the assembly of the gamma-tubulin ring complex (gTuRC) at the centrosome. The gTuRC regulates the minus-end nucleation of alpha-beta tubulin heterodimers that grow into microtubule protafilaments, a critical step in centrosome duplication and spindle formation. This Bos taurus (Bovine) protein is Mitotic-spindle organizing protein 2 (MZT2).